The sequence spans 153 residues: ATP synthase subunit a (153 aa).

2 consecutive transmembrane segments (helical) span residues Ala43–Phe63 and Ile104–Ile124.

This sequence belongs to the ATPase A chain family. In terms of assembly, F-type ATPases have 2 components, CF(1) - the catalytic core - and CF(0) - the membrane proton channel. CF(1) has five subunits: alpha(3), beta(3), gamma(1), delta(1), epsilon(1). CF(0) has three main subunits: a(1), b(2) and c(9-12). The alpha and beta chains form an alternating ring which encloses part of the gamma chain. CF(1) is attached to CF(0) by a central stalk formed by the gamma and epsilon chains, while a peripheral stalk is formed by the delta and b chains.

It is found in the cell inner membrane. Functionally, key component of the proton channel; it plays a direct role in the translocation of protons across the membrane. This is ATP synthase subunit a (atpB) from Pseudomonas putida (Arthrobacter siderocapsulatus).